We begin with the raw amino-acid sequence, 149 residues long: 3-hydroxyacyl-[acyl-carrier-protein] dehydratase FabZ (149 aa).

Histidine 53 is a catalytic residue.

The protein belongs to the thioester dehydratase family. FabZ subfamily.

The protein resides in the cytoplasm. It catalyses the reaction a (3R)-hydroxyacyl-[ACP] = a (2E)-enoyl-[ACP] + H2O. Functionally, involved in unsaturated fatty acids biosynthesis. Catalyzes the dehydration of short chain beta-hydroxyacyl-ACPs and long chain saturated and unsaturated beta-hydroxyacyl-ACPs. This Polynucleobacter necessarius subsp. necessarius (strain STIR1) protein is 3-hydroxyacyl-[acyl-carrier-protein] dehydratase FabZ.